The chain runs to 1241 residues: ATP-dependent helicase/nuclease subunit A (1241 aa).

Positions 12–485 (SQWTDDQWKA…IDLAKNFRSR (474 aa)) constitute a UvrD-like helicase ATP-binding domain. 33 to 40 (AAAGSGKT) contributes to the ATP binding site. Residues 505–805 (GEIDYDADAE…RIMTIHKSKG (301 aa)) enclose the UvrD-like helicase C-terminal domain.

This sequence belongs to the helicase family. AddA subfamily. As to quaternary structure, heterodimer of AddA and AddB/RexB. Requires Mg(2+) as cofactor.

The enzyme catalyses Couples ATP hydrolysis with the unwinding of duplex DNA by translocating in the 3'-5' direction.. It carries out the reaction ATP + H2O = ADP + phosphate + H(+). In terms of biological role, the heterodimer acts as both an ATP-dependent DNA helicase and an ATP-dependent, dual-direction single-stranded exonuclease. Recognizes the chi site generating a DNA molecule suitable for the initiation of homologous recombination. The AddA nuclease domain is required for chi fragment generation; this subunit has the helicase and 3' -&gt; 5' nuclease activities. This Bacillus anthracis protein is ATP-dependent helicase/nuclease subunit A.